The following is a 340-amino-acid chain: tRNA N6-adenosine threonylcarbamoyltransferase (340 aa).

Fe cation contacts are provided by His-115 and His-119. Substrate-binding positions include 138 to 142, Asp-171, Gly-184, Asp-188, and Asn-278; that span reads VVSGG. Residue Asp-306 participates in Fe cation binding.

Belongs to the KAE1 / TsaD family. Requires Fe(2+) as cofactor.

The protein localises to the cytoplasm. It carries out the reaction L-threonylcarbamoyladenylate + adenosine(37) in tRNA = N(6)-L-threonylcarbamoyladenosine(37) in tRNA + AMP + H(+). Functionally, required for the formation of a threonylcarbamoyl group on adenosine at position 37 (t(6)A37) in tRNAs that read codons beginning with adenine. Is involved in the transfer of the threonylcarbamoyl moiety of threonylcarbamoyl-AMP (TC-AMP) to the N6 group of A37, together with TsaE and TsaB. TsaD likely plays a direct catalytic role in this reaction. The chain is tRNA N6-adenosine threonylcarbamoyltransferase from Clostridium botulinum (strain Kyoto / Type A2).